The sequence spans 437 residues: Phosphomethylpyrimidine synthase (437 aa).

Substrate is bound by residues asparagine 69, methionine 98, tyrosine 127, histidine 163, 185 to 187 (SRG), 226 to 229 (DACR), and glutamate 265. Residue histidine 269 coordinates Zn(2+). Residue tyrosine 292 participates in substrate binding. Histidine 333 is a Zn(2+) binding site. [4Fe-4S] cluster-binding residues include cysteine 409, cysteine 412, and cysteine 416.

It belongs to the ThiC family. [4Fe-4S] cluster is required as a cofactor.

It catalyses the reaction 5-amino-1-(5-phospho-beta-D-ribosyl)imidazole + S-adenosyl-L-methionine = 4-amino-2-methyl-5-(phosphooxymethyl)pyrimidine + CO + 5'-deoxyadenosine + formate + L-methionine + 3 H(+). The protein operates within cofactor biosynthesis; thiamine diphosphate biosynthesis. In terms of biological role, catalyzes the synthesis of the hydroxymethylpyrimidine phosphate (HMP-P) moiety of thiamine from aminoimidazole ribotide (AIR) in a radical S-adenosyl-L-methionine (SAM)-dependent reaction. The polypeptide is Phosphomethylpyrimidine synthase (Clostridium botulinum (strain Langeland / NCTC 10281 / Type F)).